We begin with the raw amino-acid sequence, 321 residues long: Transcription factor ATOH8 (321 aa).

Disordered regions lie at residues Gly-59–Ser-193 and His-203–Ser-222. Residues Val-70–Pro-85 show a composition bias toward pro residues. Residues Ala-93–Lys-109 are compositionally biased toward basic and acidic residues. Over residues Leu-121–Pro-132 the composition is skewed to pro residues. Over residues Gln-133–Gln-143 the composition is skewed to low complexity. The span at Pro-160–Arg-186 shows a compositional bias: pro residues. A basic motif; degenerate region spans residues Thr-230–Val-243. One can recognise a bHLH domain in the interval Thr-230 to Leu-282. The tract at residues His-244 to Leu-282 is helix-loop-helix motif.

Efficient DNA binding requires dimerization with another bHLH protein. Interacts with NEUROG3 and NEUROD1. Interacts with ZFPM2; mediates indirect interaction with GATA4. Forms a heterodimer with TCF3; repress transcription of TCF3 and TCF3/NEUROG3 dimer-induced transactivation of E box-dependent promoters. As to expression, expressed in lung, liver, kidney, heart and pancreas. Expressed in endothel of umbilical vessels.

It is found in the nucleus. Its subcellular location is the nucleus speckle. It localises to the cytoplasm. Transcription factor that binds a palindromic (canonical) core consensus DNA sequence 5'-CANNTG- 3' known as an E-box element, possibly as a heterodimer with other bHLH proteins. Regulates endothelial cell proliferation, migration and tube-like structures formation. Modulates endothelial cell differentiation through NOS3. May be implicated in specification and differentiation of neuronal cell lineages in the brain. May participate in kidney development and may be involved in podocyte differentiation. During early embryonic development is involved in tissue-specific differentiation processes that are dependent on class II bHLH factors and namely modulates the differentiation program initiated by the pro-endocrine factor NEUROG3. During myogenesis, may play a role during the transition of myoblasts from the proliferative phase to the differentiation phase. Positively regulates HAMP transcription in two ways, firstly by acting directly on the HAMP promoter via E-boxes binding and indirectly through increased phosphorylation of SMAD protein complex. Repress NEUROG3-dependent gene activation in a gene-specific manner through at least two mechanisms; requires only either the sequestering of a general partner such as TCF3 through heterodimerization, either also requires binding of the bHLH domain to DNA via a basic motif. This chain is Transcription factor ATOH8, found in Homo sapiens (Human).